The primary structure comprises 486 residues: Achaete-scute complex protein T8 (486 aa).

2 disordered regions span residues 1 to 26 (MAAL…GIKT) and 75 to 158 (AAST…LPLP). The span at 75–86 (AASTTNTTPISS) shows a compositional bias: polar residues. The region spanning 159 to 223 (QAVARRNARE…RMAVEYIRSL (65 aa)) is the bHLH domain.

In terms of assembly, efficient DNA binding requires dimerization with another bHLH protein. In terms of tissue distribution, l(1)SC, SC and AC strongly label the presumptive stomatogastric nervous system, while ASE is more prominent in the presumptive procephalic lobe.

Functionally, involved in the determination of the neuronal precursors of optic lobes in the central nervous system. This is Achaete-scute complex protein T8 (ase) from Drosophila melanogaster (Fruit fly).